Here is a 341-residue protein sequence, read N- to C-terminus: Heat-inducible transcription repressor HrcA (341 aa).

It belongs to the HrcA family.

Negative regulator of class I heat shock genes (grpE-dnaK-dnaJ and groELS operons). Prevents heat-shock induction of these operons. This is Heat-inducible transcription repressor HrcA from Leptothrix cholodnii (strain ATCC 51168 / LMG 8142 / SP-6) (Leptothrix discophora (strain SP-6)).